Consider the following 217-residue polypeptide: Adenylate kinase (217 aa).

10–15 (GAGKGT) serves as a coordination point for ATP. The tract at residues 30–59 (STGDMLRAAVKAGTPLGLQAKDIMASGGLV) is NMP. AMP is bound by residues T31, R36, 57–59 (GLV), 85–88 (GFPR), and Q92. Positions 122 to 159 (GRRVHEASGRVYHIIHNAPRVEGHDDVTGEPLVQRPDD) are LID. ATP-binding positions include R123 and 132 to 133 (VY). R156 and R167 together coordinate AMP. G203 contacts ATP.

This sequence belongs to the adenylate kinase family. In terms of assembly, monomer.

The protein resides in the cytoplasm. The enzyme catalyses AMP + ATP = 2 ADP. The protein operates within purine metabolism; AMP biosynthesis via salvage pathway; AMP from ADP: step 1/1. Its function is as follows. Catalyzes the reversible transfer of the terminal phosphate group between ATP and AMP. Plays an important role in cellular energy homeostasis and in adenine nucleotide metabolism. The sequence is that of Adenylate kinase from Cellvibrio japonicus (strain Ueda107) (Pseudomonas fluorescens subsp. cellulosa).